Consider the following 47-residue polypeptide: IPYGGNGVHHGKAGDSXTVDTAIGNIGNNAASIIGGMISGWASGLAG.

This sequence belongs to the bacteriocin class IIA/YGNGV family.

It localises to the secreted. Its function is as follows. Has bactericidal activity against various Gram-negative Campylobacter, and the Gram-positive L.monocytogenes and B.subtilis. In vitro, inhibits C.jejuni strain ATCC 33560 (MIC=27.3 ug/ml). This chain is Bacteriocin curvaticin DN317, found in Latilactobacillus curvatus (Lactobacillus curvatus).